A 678-amino-acid chain; its full sequence is Translation factor GUF1 homolog, chloroplastic (678 aa).

The N-terminal 43 residues, 1–43 (MASILLSLNTHTLLPLHTRTRTTKTTLKILRFSHKLPPSSPFY), are a transit peptide targeting the chloroplast. The 182-residue stretch at 81–262 (KNIRNFCIIA…AIVERVPPPR (182 aa)) folds into the tr-type G domain. GTP is bound by residues 90–97 (AHIDHGKS), 155–159 (DTPGH), and 209–212 (NKID).

This sequence belongs to the TRAFAC class translation factor GTPase superfamily. Classic translation factor GTPase family. LepA subfamily.

It is found in the plastid. The protein localises to the chloroplast. The enzyme catalyses GTP + H2O = GDP + phosphate + H(+). In terms of biological role, promotes chloroplast protein synthesis. May act as a fidelity factor of the translation reaction, by catalyzing a one-codon backward translocation of tRNAs on improperly translocated ribosomes. The chain is Translation factor GUF1 homolog, chloroplastic from Populus trichocarpa (Western balsam poplar).